Consider the following 343-residue polypeptide: MSQRTLTQFLIEQQRKEAALPAQLRLLVEIVARACKTISHCVNKGALGGMLGNLTSENVQGEVQKKLDVIANEKLLEANEWGGHLAAMASEEMETIHLIPNRYPKGEYLLLFDPIDGSSNIDVDLSVGTIFSVLTAPEDVSGRAVTEADFLQPGRKQVAAGYAIYGPQTLLILSVGTGVYEFALDREMGSWVLTNERIRIPSGNREFAINMSNMRHWAPPVRRYIDECLAGTTGPREANFNMRWTASMVADIHRILKRGGIFMYPWDAREPDRAGKLRLMYEANPMGFLIEQAGGMAFDGNHRILDIEPKALHQRVGVVMGDRDEVKRVVQYHHDANLAKQTA.

Residues E91, D113, I115, and D116 each contribute to the Mg(2+) site. Residues 116-119 (DGSS), N210, and K276 contribute to the substrate site. E282 serves as a coordination point for Mg(2+).

This sequence belongs to the FBPase class 1 family. As to quaternary structure, homotetramer. It depends on Mg(2+) as a cofactor.

The protein resides in the cytoplasm. It catalyses the reaction beta-D-fructose 1,6-bisphosphate + H2O = beta-D-fructose 6-phosphate + phosphate. Its pathway is carbohydrate biosynthesis; gluconeogenesis. In Parvibaculum lavamentivorans (strain DS-1 / DSM 13023 / NCIMB 13966), this protein is Fructose-1,6-bisphosphatase class 1.